The following is a 65-amino-acid chain: Large ribosomal subunit protein bL35 (65 aa).

It belongs to the bacterial ribosomal protein bL35 family.

This Blochmanniella pennsylvanica (strain BPEN) protein is Large ribosomal subunit protein bL35.